The sequence spans 337 residues: DNA replication regulator sld2 (337 aa).

Phosphothreonine; by cdc2 occurs at positions 60 and 74. Positions 71-97 (KFQTPTKQRAETEANESPKAPRNDYLQ) are disordered. Ser-87 is subject to Phosphoserine; by cdc2. Phosphothreonine; by cdc2 occurs at positions 99 and 154. Ser-183 carries the phosphoserine modification. The tract at residues 258–302 (SMNLSKSHLEGLPEIDEDAENGIDDNEDTTASKDSSPFLDLQSER) is disordered. Over residues 270–285 (PEIDEDAENGIDDNED) the composition is skewed to acidic residues.

Belongs to the SLD2 family. In terms of assembly, interacts with rad4. Phosphorylated by cdc2 at the onset of S-phase.

The protein resides in the cytoplasm. It is found in the nucleus. Functionally, has a role in the initiation of DNA replication. Required at S-phase checkpoint. The chain is DNA replication regulator sld2 (drc1) from Schizosaccharomyces pombe (strain 972 / ATCC 24843) (Fission yeast).